The primary structure comprises 40 residues: Small polypeptide DEVIL 6 (40 aa).

The tract at residues 9–40 (SSSRGLGGVLREQRAKLYIIKRCVVMLLCWQD) is required for DVL/RTFL small polypeptide activity. The helical transmembrane segment at 12–28 (RGLGGVLREQRAKLYII) threads the bilayer.

Belongs to the DVL/RTFL small polypeptides family.

The protein localises to the cell membrane. Small polypeptide acting as a regulatory molecule which coordinates cellular responses required for differentiation, growth and development, probably by restricting polar cell proliferation in lateral organs and coordinating socket cell recruitment and differentiation at trichome sites. The chain is Small polypeptide DEVIL 6 from Arabidopsis thaliana (Mouse-ear cress).